The sequence spans 846 residues: MAP7 domain-containing protein 1 (846 aa).

Disordered regions lie at residues 1 to 153 (MESG…ERAK) and 186 to 210 (EQRL…EKNK). Positions 24–41 (EPRPSPEGDPSPPPPPTP) are enriched in pro residues. Phosphothreonine is present on residues Thr-49 and Thr-53. Phosphoserine is present on Ser-95. Phosphothreonine is present on Thr-99. Residues 113-123 (RSSQPSPTTVP) are compositionally biased toward low complexity. A phosphoserine mark is found at Ser-115 and Ser-118. At Thr-120 the chain carries Phosphothreonine. Ser-125 and Ser-127 each carry phosphoserine. Residues 130 to 224 (AKQDVKKAGE…AAIQRSVKKT (95 aa)) are a coiled coil. Over residues 132–153 (QDVKKAGERHKLAKERREERAK) the composition is skewed to basic and acidic residues. Phosphoserine is present on residues Ser-256, Ser-275, Ser-315, Ser-368, and Ser-401. A disordered region spans residues 318 to 816 (TLPRNGRDQG…KGTAGDKSLG (499 aa)). Residues 407–437 (RRLEATPVQKKEKKDKERENEKEKSALARER) show a composition bias toward basic and acidic residues. Residues 414-443 (VQKKEKKDKERENEKEKSALARERNLKKRQ) are a coiled coil. A phosphoserine mark is found at Ser-444, Ser-448, Ser-454, and Ser-460. The segment covering 460–471 (SPKSKARPSSPS) has biased composition (low complexity). A Glycyl lysine isopeptide (Lys-Gly) (interchain with G-Cter in SUMO2) cross-link involves residue Lys-462. Ser-479 and Ser-496 each carry phosphoserine. The segment covering 479-497 (SPCPSPGPGHALPPKPPSP) has biased composition (pro residues). Over residues 523–539 (PEDKNHRKSRAAEEKEP) the composition is skewed to basic and acidic residues. Pro residues predominate over residues 542–556 (PASPAPSPVPSPTPA). 3 positions are modified to phosphoserine: Ser-544, Ser-548, and Ser-552. A Phosphothreonine modification is found at Thr-554. Low complexity predominate over residues 568 to 579 (PAETAVPAVPAA). Residues 599-740 (TTDREEATRL…AETKKQDAKE (142 aa)) adopt a coiled-coil conformation. The span at 600–740 (TDREEATRLL…AETKKQDAKE (141 aa)) shows a compositional bias: basic and acidic residues. Residue Thr-818 is modified to Phosphothreonine.

This sequence belongs to the MAP7 family.

Its subcellular location is the cytoplasm. The protein resides in the cytoskeleton. It is found in the spindle. The protein localises to the microtubule organizing center. It localises to the centrosome. Its subcellular location is the midbody. Its function is as follows. Microtubule-stabilizing protein involved in the control of cell motility and neurite outgrowth. Facilitate microtubule stabilization through the maintenance of acetylated stable microtubules. This chain is MAP7 domain-containing protein 1 (Map7d1), found in Mus musculus (Mouse).